Consider the following 413-residue polypeptide: Probable inactive allantoicase (413 aa).

This sequence belongs to the allantoicase family.

Its function is as follows. The function of this enzyme is unclear as allantoicase activity is not known to exist in mammals. This is Probable inactive allantoicase from Rattus norvegicus (Rat).